Reading from the N-terminus, the 670-residue chain is Catalase (670 aa).

Catalysis depends on residues histidine 61 and asparagine 132. Residue tyrosine 345 coordinates heme.

The protein belongs to the catalase family. As to quaternary structure, homotetramer. The cofactor is heme.

Its subcellular location is the peroxisome matrix. It carries out the reaction 2 H2O2 = O2 + 2 H2O. In terms of biological role, catalyzes the degradation of hydrogen peroxide (H(2)O(2)) generated by peroxisomal oxidases to water and oxygen, thereby protecting cells from the toxic effects of hydrogen peroxide. The protein is Catalase of Penicillium janthinellum (Penicillium vitale).